A 336-amino-acid polypeptide reads, in one-letter code: Probable magnesium transporter NIPA2 (336 aa).

Residues 1–7 (MEEMSPD) lie on the Extracellular side of the membrane. Residues 8 to 28 (NIHGVILAVSSSIFIGSSFII) form a helical membrane-spanning segment. The Cytoplasmic portion of the chain corresponds to 29-55 (KKKGLKKAGVSGARAGEGGYGYLYEPW). The helical transmembrane segment at 56–76 (WWAGMITMIVGEIANFAAYAF) threads the bilayer. Topologically, residues 77-79 (APA) are extracellular. Residues 80 to 100 (ILVTPLGALSIIFSAVLAHFI) form a helical membrane-spanning segment. Topologically, residues 101-104 (LEEK) are cytoplasmic. The chain crosses the membrane as a helical span at residues 105 to 125 (LHMFGILGCVLCVVGSTTIVL). Over 126 to 145 (HAPHEQGIESVKQVWHLATE) the chain is Extracellular. The chain crosses the membrane as a helical span at residues 146–166 (PGFLAYSAVVLVVVLALIFYY). The Cytoplasmic segment spans residues 167 to 179 (EPRYGKTHMIVYV). A helical transmembrane segment spans residues 180–200 (GICSLMGSLTVMSVKAVAIAI). The Extracellular portion of the chain corresponds to 201–212 (KLTFSGMNQFKY). A helical transmembrane segment spans residues 213–233 (FHAWIFIIVVTICCILQINYL). Topologically, residues 234 to 244 (NKALDNFNTAV) are cytoplasmic. Residues 245 to 265 (ISPVYYVMFTTFTILASMIMF) form a helical membrane-spanning segment. Over 266 to 272 (KDWASQS) the chain is Extracellular. Residues 273 to 293 (GLQIATELCGFVTILSGTFLL) form a helical membrane-spanning segment. Residues 294-336 (HKTKDMGNSTSLRGSTSHSPRDTPVFINSGSSRSSNSTRPAIL) are Cytoplasmic-facing. A disordered region spans residues 303 to 336 (TSLRGSTSHSPRDTPVFINSGSSRSSNSTRPAIL). The span at 321-330 (NSGSSRSSNS) shows a compositional bias: low complexity.

Belongs to the NIPA (TC 2.A.7) family. In terms of assembly, homodimer.

It is found in the cell membrane. The protein resides in the early endosome. Acts as a Mg(2+) transporter. Can also transport other divalent cations such as Fe(2+), Sr(2+), Ba(2+), Mn(2+) and Co(2+) but to a much less extent than Mg(2+). The polypeptide is Probable magnesium transporter NIPA2 (Arabidopsis thaliana (Mouse-ear cress)).